Here is a 436-residue protein sequence, read N- to C-terminus: 3-ketoacyl-CoA thiolase (436 aa).

Catalysis depends on Cys99, which acts as the Acyl-thioester intermediate. Active-site proton acceptor residues include His392 and Cys422.

Belongs to the thiolase-like superfamily. Thiolase family. As to quaternary structure, heterotetramer of two alpha chains (FadJ) and two beta chains (FadI).

It localises to the cytoplasm. The enzyme catalyses an acyl-CoA + acetyl-CoA = a 3-oxoacyl-CoA + CoA. It participates in lipid metabolism; fatty acid beta-oxidation. Catalyzes the final step of fatty acid oxidation in which acetyl-CoA is released and the CoA ester of a fatty acid two carbons shorter is formed. This Yersinia enterocolitica serotype O:8 / biotype 1B (strain NCTC 13174 / 8081) protein is 3-ketoacyl-CoA thiolase.